The chain runs to 326 residues: Pyruvate dehydrogenase E1 component subunit alpha (326 aa).

Heterodimer of an alpha and a beta chain. It depends on thiamine diphosphate as a cofactor.

The enzyme catalyses N(6)-[(R)-lipoyl]-L-lysyl-[protein] + pyruvate + H(+) = N(6)-[(R)-S(8)-acetyldihydrolipoyl]-L-lysyl-[protein] + CO2. Functionally, the pyruvate dehydrogenase complex catalyzes the overall conversion of pyruvate to acetyl-CoA and CO(2). It contains multiple copies of three enzymatic components: pyruvate dehydrogenase (E1), dihydrolipoamide acetyltransferase (E2) and lipoamide dehydrogenase (E3). The polypeptide is Pyruvate dehydrogenase E1 component subunit alpha (pdhA) (Rickettsia prowazekii (strain Madrid E)).